Here is a 20-residue protein sequence, read N- to C-terminus: RDVDVGSFLPKSPSDPSMVL.

Residues 1 to 20 are disordered; sequence RDVDVGSFLPKSPSDPSMVL.

It is found in the plastid. Its subcellular location is the chloroplast thylakoid lumen. In Spinacia oleracea (Spinach), this protein is Thylakoid lumenal 20 kDa protein.